The sequence spans 278 residues: MDVRQSIHSAHAKTLDTQGLRNEFLVEKVFVADEYTMVYSHIDRIIVGGIMPITKTVSVGGEVGKQLGVSYFLERRELGVINIGGAGTITVDGQCYEIGHRDALYVGKGAKEVVFASIDTATPAKFYYNCAPAHTTYPTKKVTPDEVSPVTLGDNLTSNRRTINKYFVPDVLETCQLSMGLTELAPGNLWNTMPCHTHERRMEVYFYFNMDDDACVFHMMGQPQETRHIVMHNEQAVISPSWSIHSGVGTKAYTFIWGMVGENQVFDDMDHVAVKDLR.

Positions 196, 198, 203, and 245 each coordinate Zn(2+).

This sequence belongs to the KduI family. The cofactor is Zn(2+).

The enzyme catalyses 5-dehydro-4-deoxy-D-glucuronate = 3-deoxy-D-glycero-2,5-hexodiulosonate. The protein operates within glycan metabolism; pectin degradation; 2-dehydro-3-deoxy-D-gluconate from pectin: step 4/5. Catalyzes the isomerization of 5-dehydro-4-deoxy-D-glucuronate to 3-deoxy-D-glycero-2,5-hexodiulosonate. In Shigella sonnei (strain Ss046), this protein is 4-deoxy-L-threo-5-hexosulose-uronate ketol-isomerase.